Here is a 673-residue protein sequence, read N- to C-terminus: Polygalacturonate 4-alpha-galacturonosyltransferase (673 aa).

Residues 1 to 22 lie on the Cytoplasmic side of the membrane; that stretch reads MALKRGLSGVNRIRGSGGGSRS. A helical; Signal-anchor for type II membrane protein membrane pass occupies residues 23 to 43; it reads VLVLLIFFCVFAPLCFFVGRG. Over 44 to 673 the chain is Lumenal; the sequence is VYIDSSNDYS…PYLRRCNLHE (630 aa). An N-linked (GlcNAc...) asparagine glycan is attached at asparagine 103. The tract at residues 112-136 is disordered; that stretch reads GVDPSFRHSENPATPDVKSNNLNEK. 4 N-linked (GlcNAc...) asparagine glycosylation sites follow: asparagine 382, asparagine 434, asparagine 538, and asparagine 585.

This sequence belongs to the glycosyltransferase 8 family. In terms of tissue distribution, expressed in seedlings, inflorescences, flowers, siliques, pollen, roots, stems and leaves.

The protein resides in the golgi apparatus membrane. The catalysed reaction is [(1-&gt;4)-alpha-D-galacturonosyl](n) + UDP-alpha-D-galacturonate = [(1-&gt;4)-alpha-D-galacturonosyl](n+1) + UDP + H(+). Its pathway is glycan metabolism; pectin biosynthesis. Functionally, involved in pectin biosynthesis. Catalyzes the transfer of galacturonic acid from uridine 5'-diphosphogalacturonic acid onto the pectic polysaccharide homogalacturonan. The polypeptide is Polygalacturonate 4-alpha-galacturonosyltransferase (GAUT1) (Arabidopsis thaliana (Mouse-ear cress)).